A 990-amino-acid chain; its full sequence is TonB-dependent receptor P26 (990 aa).

A TonB box motif is present at residues 86-93; sequence DEVVVIGY. In terms of domain architecture, TBDR plug spans 97–213; sequence RKSDLTGSVS…ANGVVLVTTK (117 aa). Residues 220–990 form the TBDR beta-barrel domain; the sequence is SSKPEVSANI…TITLGLNVTF (771 aa). The interval 878-902 is disordered; that stretch reads TPENPTSDIPRAGGDSVTGTPPNSA. The TonB C-terminal box signature appears at 974–990; it reads GSYPNPRTITLGLNVTF.

It belongs to the TonB-dependent receptor family.

It is found in the cell outer membrane. Functionally, tonB-dependent receptor probably involved in ulvan degradation. Ulvan is the main polysaccharide component of the Ulvales (green seaweed) cell wall. It is composed of disaccharide building blocks comprising 3-sulfated rhamnose (Rha3S) linked to D-glucuronic acid (GlcA), L-iduronic acid (IduA), or D-xylose (Xyl). The TonB-dependent receptor may mediate transport of ulvan oligosaccharides from the surface of the outer membrane to the periplasm for subsequent degradation. This Formosa agariphila (strain DSM 15362 / KCTC 12365 / LMG 23005 / KMM 3901 / M-2Alg 35-1) protein is TonB-dependent receptor P26.